Here is a 103-residue protein sequence, read N- to C-terminus: Small ribosomal subunit protein uS10 (103 aa).

It belongs to the universal ribosomal protein uS10 family. Part of the 30S ribosomal subunit.

Involved in the binding of tRNA to the ribosomes. The sequence is that of Small ribosomal subunit protein uS10 from Colwellia psychrerythraea (strain 34H / ATCC BAA-681) (Vibrio psychroerythus).